Here is a 935-residue protein sequence, read N- to C-terminus: Protocadherin gamma-A11 (935 aa).

The N-terminal stretch at methionine 1–alanine 29 is a signal peptide. 6 Cadherin domains span residues arginine 30–phenylalanine 134, glutamine 135–phenylalanine 243, threonine 244–isoleucine 348, threonine 349–phenylalanine 453, proline 454–isoleucine 563, and aspartate 571–glycine 677. Residues arginine 30 to tyrosine 693 are Extracellular-facing. Asparagine 48 carries N-linked (GlcNAc...) asparagine glycosylation. 4 N-linked (GlcNAc...) asparagine glycosylation sites follow: asparagine 255, asparagine 266, asparagine 420, and asparagine 546. Residues leucine 694–alanine 714 traverse the membrane as a helical segment. Over leucine 715–lysine 935 the chain is Cytoplasmic. 2 disordered regions span residues cysteine 805–asparagine 844 and alanine 905–lysine 935. The segment covering proline 807–asparagine 844 has biased composition (polar residues). A compositionally biased stretch (basic residues) spans asparagine 925 to lysine 935.

It localises to the cell membrane. In terms of biological role, potential calcium-dependent cell-adhesion protein. May be involved in the establishment and maintenance of specific neuronal connections in the brain. The sequence is that of Protocadherin gamma-A11 (PCDHGA11) from Homo sapiens (Human).